A 497-amino-acid chain; its full sequence is Glucose-6-phosphate 1-dehydrogenase (497 aa).

NADP(+) is bound by residues 15–22, Arg49, and Lys153; that span reads GASGDLSK. D-glucose 6-phosphate contacts are provided by residues Lys153, 183–187, Glu221, and Asp240; that span reads HYLGK. The Proton acceptor role is filled by His245. Arg336 lines the NADP(+) pocket. D-glucose 6-phosphate is bound at residue Lys339. Positions 345, 349, and 371 each coordinate NADP(+). Gln373 contacts D-glucose 6-phosphate. Residues 379–381, 399–401, and Arg466 contribute to the NADP(+) site; these read YLK and DLT.

Belongs to the glucose-6-phosphate dehydrogenase family.

It catalyses the reaction D-glucose 6-phosphate + NADP(+) = 6-phospho-D-glucono-1,5-lactone + NADPH + H(+). Its pathway is carbohydrate degradation; pentose phosphate pathway; D-ribulose 5-phosphate from D-glucose 6-phosphate (oxidative stage): step 1/3. Functionally, catalyzes the rate-limiting step of the oxidative pentose-phosphate pathway, which represents a route for the dissimilation of carbohydrates besides glycolysis. The main function of this enzyme is to provide reducing power (NADPH) and pentose phosphates for fatty acid and nucleic acid synthesis. The protein is Glucose-6-phosphate 1-dehydrogenase (ZWF) of Kluyveromyces lactis (strain ATCC 8585 / CBS 2359 / DSM 70799 / NBRC 1267 / NRRL Y-1140 / WM37) (Yeast).